The sequence spans 170 residues: Urease accessory protein UreE (170 aa).

Residues 134 to 170 are disordered; sequence ESGAYGGGHHHHGDDGHHPLAPIPLRQKIHRPSDKAE.

This sequence belongs to the UreE family.

The protein localises to the cytoplasm. Functionally, involved in urease metallocenter assembly. Binds nickel. Probably functions as a nickel donor during metallocenter assembly. The chain is Urease accessory protein UreE from Janthinobacterium sp. (strain Marseille) (Minibacterium massiliensis).